The following is a 188-amino-acid chain: Preprocaerulein type-1 (188 aa).

Residues 1-26 form the signal peptide; sequence MFKGILLCVLFAVLSANPLSQPEGFA. Positions 27-170 are excised as a propeptide; the sequence is DEERDVRGLA…ANDERRFADG (144 aa). A disordered region spans residues 152 to 188; the sequence is LGGSPQQREANDERRFADGQQDYTGWMDFGRRNGEDD. Tyr-174 carries the post-translational modification Sulfotyrosine. A Phenylalanine amide modification is found at Phe-180. Residues 184 to 188 constitute a propeptide that is removed on maturation; it reads NGEDD.

Belongs to the gastrin/cholecystokinin family. Expressed by the skin glands.

The protein resides in the secreted. Functionally, the pharmacological activities of caerulein are quite similar to the physiological activities of gastrin and related peptides. This Xenopus laevis (African clawed frog) protein is Preprocaerulein type-1.